Reading from the N-terminus, the 630-residue chain is Telomere repeat-binding protein 5 (630 aa).

3 disordered regions span residues 1 to 38 (MVLQ…SENH), 56 to 78 (EGGN…CAVK), and 308 to 327 (YTAS…GSPR). Residues 57–71 (GGNSSSSSNNTSGNN) show a composition bias toward low complexity. Positions 309–325 (TASQSEETNKNEGQSGS) are enriched in polar residues. The Ubiquitin-like domain occupies 354 to 433 (VKLGIKSFRV…SDTLGFCLEP (80 aa)). A disordered region spans residues 463–489 (LPSPGKHAKPSNSVESDLDSKPSAPNR). One can recognise an HTH myb-type domain in the interval 523 to 582 (AQRRIRRPFSVAEVEALVQAVERLGTGRWRDVKLRAFDNAKHRTYVDLKDKWKTLVHTAR). The H-T-H motif DNA-binding region spans 551-578 (WRDVKLRAFDNAKHRTYVDLKDKWKTLV).

In terms of assembly, homodimer. As to expression, expressed ubiquitously.

The protein localises to the nucleus. Binds specifically to the plant telomeric double-stranded DNA sequences. At least 6 repeats of telomeric sequences are required for binding. This is Telomere repeat-binding protein 5 (TRP5) from Arabidopsis thaliana (Mouse-ear cress).